The primary structure comprises 414 residues: uncharacterized protein (414 aa).

Positions 1-18 are cleaved as a signal peptide; sequence MLKRLMLASAILPVVSFA.

This is an uncharacterized protein from Aquifex aeolicus (strain VF5).